A 307-amino-acid chain; its full sequence is Agmatinase (307 aa).

Mn(2+) is bound by residues His-128, Asp-151, His-153, Asp-155, Asp-232, and Asp-234.

The protein belongs to the arginase family. Agmatinase subfamily. Mn(2+) serves as cofactor.

It catalyses the reaction agmatine + H2O = urea + putrescine. The protein operates within amine and polyamine biosynthesis; putrescine biosynthesis via agmatine pathway; putrescine from agmatine: step 1/1. Functionally, catalyzes the formation of putrescine from agmatine. The chain is Agmatinase from Neisseria meningitidis serogroup A / serotype 4A (strain DSM 15465 / Z2491).